Reading from the N-terminus, the 245-residue chain is Eukaryotic translation initiation factor 6 (245 aa).

This sequence belongs to the eIF-6 family. In terms of assembly, monomer. Associates with the 60S ribosomal subunit.

It localises to the cytoplasm. The protein resides in the nucleus. Its subcellular location is the nucleolus. In terms of biological role, binds to the 60S ribosomal subunit and prevents its association with the 40S ribosomal subunit to form the 80S initiation complex in the cytoplasm. May also be involved in ribosome biogenesis. The chain is Eukaryotic translation initiation factor 6 (eif6) from Xenopus laevis (African clawed frog).